We begin with the raw amino-acid sequence, 206 residues long: Thymidylate kinase (206 aa).

An ATP-binding site is contributed by 11–18; sequence GPEGAGKT.

It belongs to the thymidylate kinase family.

It carries out the reaction dTMP + ATP = dTDP + ADP. In terms of biological role, phosphorylation of dTMP to form dTDP in both de novo and salvage pathways of dTTP synthesis. The sequence is that of Thymidylate kinase (tmk) from Deinococcus radiodurans (strain ATCC 13939 / DSM 20539 / JCM 16871 / CCUG 27074 / LMG 4051 / NBRC 15346 / NCIMB 9279 / VKM B-1422 / R1).